We begin with the raw amino-acid sequence, 140 residues long: Ribosome-binding factor A (140 aa).

The interval 116–140 is disordered; sequence RERQERGEIPPGSDDAQNCHDDEPS.

Belongs to the RbfA family. Monomer. Binds 30S ribosomal subunits, but not 50S ribosomal subunits or 70S ribosomes.

The protein resides in the cytoplasm. One of several proteins that assist in the late maturation steps of the functional core of the 30S ribosomal subunit. Associates with free 30S ribosomal subunits (but not with 30S subunits that are part of 70S ribosomes or polysomes). Required for efficient processing of 16S rRNA. May interact with the 5'-terminal helix region of 16S rRNA. This chain is Ribosome-binding factor A, found in Synechococcus sp. (strain WH7803).